Consider the following 118-residue polypeptide: Beta-2-microglobulin (118 aa).

The N-terminal stretch at 1 to 21 is a signal peptide; that stretch reads MESRWGIVVIGLLCCVSWVEA. An Ig-like C1-type domain is found at 26 to 113; the sequence is PKIQVYTRSP…THNSVTKSVK (88 aa). A disulfide bond links Cys46 and Cys101.

Belongs to the beta-2-microglobulin family. As to quaternary structure, heterodimer of an alpha chain and a beta chain. Beta-2-microglobulin is the beta-chain of major histocompatibility complex class I molecules.

Its subcellular location is the secreted. Functionally, component of the class I major histocompatibility complex (MHC). Involved in the presentation of peptide antigens to the immune system. The protein is Beta-2-microglobulin (B2M) of Tachyglossus aculeatus aculeatus (Southeast Australian short-beaked echidna).